A 228-amino-acid chain; its full sequence is Uracil-DNA glycosylase (228 aa).

D64 acts as the Proton acceptor in catalysis.

It belongs to the uracil-DNA glycosylase (UDG) superfamily. UNG family. Monomer.

It is found in the cytoplasm. It catalyses the reaction Hydrolyzes single-stranded DNA or mismatched double-stranded DNA and polynucleotides, releasing free uracil.. Excises uracil residues from the DNA which can arise as a result of misincorporation of dUMP residues by DNA polymerase or due to deamination of cytosine. This is Uracil-DNA glycosylase from Escherichia coli O6:H1 (strain CFT073 / ATCC 700928 / UPEC).